A 103-amino-acid polypeptide reads, in one-letter code: Phosphoribosyl-ATP pyrophosphatase (103 aa).

This sequence belongs to the PRA-PH family.

It localises to the cytoplasm. It catalyses the reaction 1-(5-phospho-beta-D-ribosyl)-ATP + H2O = 1-(5-phospho-beta-D-ribosyl)-5'-AMP + diphosphate + H(+). The protein operates within amino-acid biosynthesis; L-histidine biosynthesis; L-histidine from 5-phospho-alpha-D-ribose 1-diphosphate: step 2/9. The polypeptide is Phosphoribosyl-ATP pyrophosphatase (Listeria monocytogenes serotype 4b (strain CLIP80459)).